The sequence spans 101 residues: Chaperone modulatory protein CbpM (101 aa).

It belongs to the CbpM family.

In terms of biological role, interacts with CbpA and inhibits both the DnaJ-like co-chaperone activity and the DNA binding activity of CbpA. Together with CbpA, modulates the activity of the DnaK chaperone system. Does not inhibit the co-chaperone activity of DnaJ. This is Chaperone modulatory protein CbpM from Salmonella arizonae (strain ATCC BAA-731 / CDC346-86 / RSK2980).